A 596-amino-acid chain; its full sequence is Arginine--tRNA ligase (596 aa).

The 'HIGH' region signature appears at 139 to 149 (ANPTGPLHVGH).

The protein belongs to the class-I aminoacyl-tRNA synthetase family. Monomer.

Its subcellular location is the cytoplasm. It carries out the reaction tRNA(Arg) + L-arginine + ATP = L-arginyl-tRNA(Arg) + AMP + diphosphate. This is Arginine--tRNA ligase from Paraburkholderia phytofirmans (strain DSM 17436 / LMG 22146 / PsJN) (Burkholderia phytofirmans).